An 82-amino-acid chain; its full sequence is DNA-directed RNA polymerase subunit Rpo5 (82 aa).

The protein belongs to the archaeal Rpo5/eukaryotic RPB5 RNA polymerase subunit family. In terms of assembly, part of the RNA polymerase complex.

Its subcellular location is the cytoplasm. It carries out the reaction RNA(n) + a ribonucleoside 5'-triphosphate = RNA(n+1) + diphosphate. In terms of biological role, DNA-dependent RNA polymerase (RNAP) catalyzes the transcription of DNA into RNA using the four ribonucleoside triphosphates as substrates. The polypeptide is DNA-directed RNA polymerase subunit Rpo5 (Pyrococcus horikoshii (strain ATCC 700860 / DSM 12428 / JCM 9974 / NBRC 100139 / OT-3)).